Here is a 356-residue protein sequence, read N- to C-terminus: DNA polymerase IV (356 aa).

One can recognise a UmuC domain in the interval 6–187 (IIHIDMDYFF…LDIGDFPGVG (182 aa)). Mg(2+) is bound by residues Asp-10 and Asp-105. Residue Glu-106 is part of the active site.

It belongs to the DNA polymerase type-Y family. Monomer. It depends on Mg(2+) as a cofactor.

It is found in the cytoplasm. It catalyses the reaction DNA(n) + a 2'-deoxyribonucleoside 5'-triphosphate = DNA(n+1) + diphosphate. In terms of biological role, poorly processive, error-prone DNA polymerase involved in untargeted mutagenesis. Copies undamaged DNA at stalled replication forks, which arise in vivo from mismatched or misaligned primer ends. These misaligned primers can be extended by PolIV. Exhibits no 3'-5' exonuclease (proofreading) activity. May be involved in translesional synthesis, in conjunction with the beta clamp from PolIII. The protein is DNA polymerase IV of Staphylococcus aureus (strain COL).